Here is a 37-residue protein sequence, read N- to C-terminus: Dolichyl-diphosphooligosaccharide--protein glycosyltransferase subunit 4A (37 aa).

Topologically, residues 1-7 (MIDDQDL) are lumenal. The chain crosses the membrane as a helical span at residues 8-28 (GFIANFLGIFIFALVIAYHYV). The Cytoplasmic portion of the chain corresponds to 29–37 (TADPKYEAT).

The protein belongs to the OST4 family. In terms of assembly, component of the oligosaccharyltransferase (OST) complex.

Its subcellular location is the endoplasmic reticulum membrane. In terms of biological role, subunit of the oligosaccharyl transferase (OST) complex that catalyzes the initial transfer of a defined glycan (Glc(3)Man(9)GlcNAc(2) in eukaryotes) from the lipid carrier dolichol-pyrophosphate to an asparagine residue within an Asn-X-Ser/Thr consensus motif in nascent polypeptide chains, the first step in protein N-glycosylation. N-glycosylation occurs cotranslationally and the complex associates with the Sec61 complex at the channel-forming translocon complex that mediates protein translocation across the endoplasmic reticulum (ER). All subunits are required for a maximal enzyme activity. In Arabidopsis thaliana (Mouse-ear cress), this protein is Dolichyl-diphosphooligosaccharide--protein glycosyltransferase subunit 4A (OST4A).